The sequence spans 670 residues: Beta-lactam-inducible penicillin-binding protein (670 aa).

A helical membrane pass occupies residues 4-24 (IKIVPLILIVVVVGFGIYFYA). Ser-25 and Ser-405 together coordinate a penicillin. The Acyl-ester intermediate role is filled by Ser-405.

Belongs to the transpeptidase family.

Its subcellular location is the cell membrane. The protein is Beta-lactam-inducible penicillin-binding protein (pbp) of Staphylococcus aureus.